A 359-amino-acid chain; its full sequence is Glycerol-3-phosphate dehydrogenase [NAD(P)+] (359 aa).

Thr11, Trp12, Arg32, and Lys107 together coordinate NADPH. Lys107 and Gly138 together coordinate sn-glycerol 3-phosphate. Ala142 provides a ligand contact to NADPH. Sn-glycerol 3-phosphate is bound by residues Lys193, Asp246, Ser256, Arg257, and Asn258. The active-site Proton acceptor is the Lys193. Arg257 lines the NADPH pocket. 2 residues coordinate NADPH: Val281 and Glu283.

It belongs to the NAD-dependent glycerol-3-phosphate dehydrogenase family.

It localises to the cytoplasm. It carries out the reaction sn-glycerol 3-phosphate + NAD(+) = dihydroxyacetone phosphate + NADH + H(+). The catalysed reaction is sn-glycerol 3-phosphate + NADP(+) = dihydroxyacetone phosphate + NADPH + H(+). It functions in the pathway membrane lipid metabolism; glycerophospholipid metabolism. In terms of biological role, catalyzes the reduction of the glycolytic intermediate dihydroxyacetone phosphate (DHAP) to sn-glycerol 3-phosphate (G3P), the key precursor for phospholipid synthesis. The protein is Glycerol-3-phosphate dehydrogenase [NAD(P)+] of Dehalococcoides mccartyi (strain ATCC BAA-2100 / JCM 16839 / KCTC 5957 / BAV1).